The sequence spans 366 residues: Chaperone protein DnaJ (366 aa).

The J domain occupies 5 to 69; it reads DYYEVLGVSK…QKRAQYDQFG (65 aa). Residues 128–210 form a CR-type zinc finger; it reads GKELNVEIPV…CHGTGKVRKR (83 aa). The Zn(2+) site is built by cysteine 141, cysteine 144, cysteine 158, cysteine 161, cysteine 184, cysteine 187, cysteine 198, and cysteine 201. CXXCXGXG motif repeat units follow at residues 141 to 148, 158 to 165, 184 to 191, and 198 to 205; these read CDTCHGSG, CKYCSGTG, CRHCSGTG, and CTTCHGTG.

It belongs to the DnaJ family. Homodimer. Zn(2+) serves as cofactor.

It localises to the cytoplasm. In terms of biological role, participates actively in the response to hyperosmotic and heat shock by preventing the aggregation of stress-denatured proteins and by disaggregating proteins, also in an autonomous, DnaK-independent fashion. Unfolded proteins bind initially to DnaJ; upon interaction with the DnaJ-bound protein, DnaK hydrolyzes its bound ATP, resulting in the formation of a stable complex. GrpE releases ADP from DnaK; ATP binding to DnaK triggers the release of the substrate protein, thus completing the reaction cycle. Several rounds of ATP-dependent interactions between DnaJ, DnaK and GrpE are required for fully efficient folding. Also involved, together with DnaK and GrpE, in the DNA replication of plasmids through activation of initiation proteins. The sequence is that of Chaperone protein DnaJ from Bacillus cytotoxicus (strain DSM 22905 / CIP 110041 / 391-98 / NVH 391-98).